A 241-amino-acid chain; its full sequence is Proteasome subunit alpha type-5 (241 aa).

The residue at position 1 (methionine 1) is an N-acetylmethionine. Position 16 is a phosphoserine (serine 16). The residue at position 55 (threonine 55) is a Phosphothreonine. Residues serine 56 and serine 63 each carry the phosphoserine modification. O-linked (GlcNAc) serine glycosylation occurs at serine 198.

This sequence belongs to the peptidase T1A family. As to quaternary structure, the 26S proteasome consists of a 20S proteasome core and two 19S regulatory subunits. The 20S proteasome core is a barrel-shaped complex made of 28 subunits that are arranged in four stacked rings. The two outer rings are each formed by seven alpha subunits, and the two inner rings are formed by seven beta subunits. The proteolytic activity is exerted by three beta-subunits PSMB5, PSMB6 and PSMB7. PSMA5 interacts directly with the PSMG1-PSMG2 heterodimer which promotes 20S proteasome assembly.

The protein localises to the cytoplasm. It localises to the nucleus. Functionally, component of the 20S core proteasome complex involved in the proteolytic degradation of most intracellular proteins. This complex plays numerous essential roles within the cell by associating with different regulatory particles. Associated with two 19S regulatory particles, forms the 26S proteasome and thus participates in the ATP-dependent degradation of ubiquitinated proteins. The 26S proteasome plays a key role in the maintenance of protein homeostasis by removing misfolded or damaged proteins that could impair cellular functions, and by removing proteins whose functions are no longer required. Associated with the PA200 or PA28, the 20S proteasome mediates ubiquitin-independent protein degradation. This type of proteolysis is required in several pathways including spermatogenesis (20S-PA200 complex) or generation of a subset of MHC class I-presented antigenic peptides (20S-PA28 complex). This is Proteasome subunit alpha type-5 (PSMA5) from Bos taurus (Bovine).